The chain runs to 543 residues: CTP synthase (543 aa).

An amidoligase domain region spans residues 1–265 (MARYIFITGG…DGEVLRHFGL (265 aa)). Ser13 contacts CTP. Ser13 serves as a coordination point for UTP. 14-19 (SLGKGL) provides a ligand contact to ATP. Tyr54 lines the L-glutamine pocket. Asp71 contributes to the ATP binding site. Mg(2+)-binding residues include Asp71 and Glu139. CTP is bound by residues 146 to 148 (DIE), 186 to 191 (KTKPTQ), and Lys222. Residues 186–191 (KTKPTQ) and Lys222 contribute to the UTP site. Residues 290–542 (TIGVVGKYVG…IAAAVKQARL (253 aa)) enclose the Glutamine amidotransferase type-1 domain. Gly354 contributes to the L-glutamine binding site. The active-site Nucleophile; for glutamine hydrolysis is Cys381. Residues 382–385 (LGMQ), Glu405, and Arg470 each bind L-glutamine. Residues His515 and Glu517 contribute to the active site.

Belongs to the CTP synthase family. In terms of assembly, homotetramer.

It carries out the reaction UTP + L-glutamine + ATP + H2O = CTP + L-glutamate + ADP + phosphate + 2 H(+). The enzyme catalyses L-glutamine + H2O = L-glutamate + NH4(+). The catalysed reaction is UTP + NH4(+) + ATP = CTP + ADP + phosphate + 2 H(+). The protein operates within pyrimidine metabolism; CTP biosynthesis via de novo pathway; CTP from UDP: step 2/2. Its activity is regulated as follows. Allosterically activated by GTP, when glutamine is the substrate; GTP has no effect on the reaction when ammonia is the substrate. The allosteric effector GTP functions by stabilizing the protein conformation that binds the tetrahedral intermediate(s) formed during glutamine hydrolysis. Inhibited by the product CTP, via allosteric rather than competitive inhibition. In terms of biological role, catalyzes the ATP-dependent amination of UTP to CTP with either L-glutamine or ammonia as the source of nitrogen. Regulates intracellular CTP levels through interactions with the four ribonucleotide triphosphates. In Novosphingobium aromaticivorans (strain ATCC 700278 / DSM 12444 / CCUG 56034 / CIP 105152 / NBRC 16084 / F199), this protein is CTP synthase.